We begin with the raw amino-acid sequence, 465 residues long: ATP synthase subunit beta (465 aa).

154–161 (GGAGVGKT) is an ATP binding site.

Belongs to the ATPase alpha/beta chains family. F-type ATPases have 2 components, CF(1) - the catalytic core - and CF(0) - the membrane proton channel. CF(1) has five subunits: alpha(3), beta(3), gamma(1), delta(1), epsilon(1). CF(0) has three main subunits: a(1), b(2) and c(9-12). The alpha and beta chains form an alternating ring which encloses part of the gamma chain. CF(1) is attached to CF(0) by a central stalk formed by the gamma and epsilon chains, while a peripheral stalk is formed by the delta and b chains.

Its subcellular location is the cell inner membrane. It catalyses the reaction ATP + H2O + 4 H(+)(in) = ADP + phosphate + 5 H(+)(out). Produces ATP from ADP in the presence of a proton gradient across the membrane. The catalytic sites are hosted primarily by the beta subunits. This Methylobacillus flagellatus (strain ATCC 51484 / DSM 6875 / VKM B-1610 / KT) protein is ATP synthase subunit beta.